The chain runs to 126 residues: Type II methyltransferase M.HgiGI (126 aa).

An SAM-dependent MTase C5-type domain is found at 1–126 (MKTIDLFAGC…ARLSKIHQQA (126 aa)). Residue cysteine 75 is part of the active site.

This sequence belongs to the class I-like SAM-binding methyltransferase superfamily. C5-methyltransferase family.

The enzyme catalyses a 2'-deoxycytidine in DNA + S-adenosyl-L-methionine = a 5-methyl-2'-deoxycytidine in DNA + S-adenosyl-L-homocysteine + H(+). Its function is as follows. A methylase, recognizes the double-stranded sequence 5'-GRCGYC-3', methylates C-? on both strands, and protects the DNA from cleavage by the HgiEI endonuclease. The polypeptide is Type II methyltransferase M.HgiGI (Herpetosiphon aurantiacus (Herpetosiphon giganteus)).